The sequence spans 219 residues: MAIFSVYVVNKAGGLIYQLDSYAPRAEAEKTFSYPLDLLLKLHDERVLVAFGQRDGIRVGHAVLAINGVDVNGKYTADGKEVLEYLGNPANYPVSIRFGRPRLTSNEKLMLASMFHSLFAIGSQLSPEQGSSGIEMLETDTFKLHCFQTLTGIKFVVLADPRQAGIDSLLRKIYEIYSDFALKNPFYSLEMPIRCELFDQNLKLALEVAEKAGTFGPGS.

Belongs to the TRAPP small subunits family. TRAPPC4 subfamily. In terms of assembly, component of the multisubunit TRAPP (transport protein particle) complex, which includes at least TRAPPC2, TRAPPC2L, TRAPPC3, TRAPPC3L, TRAPPC4, TRAPPC5, TRAPPC8, TRAPPC9, TRAPPC10, TRAPPC11 and TRAPPC12. Interacts with SDC2.

The protein resides in the postsynaptic cell membrane. It is found in the golgi apparatus membrane. The protein localises to the endoplasmic reticulum. It localises to the vesicle. Its function is as follows. Core component of the TRAPP complexes which has a function of guanine nucleotide exchange factor activity for Rab1 GTPase. Plays a role in vesicular transport from endoplasmic reticulum to Golgi and autophagy. May play a role in dendrite postsynaptic membrane trafficking. This is Trafficking protein particle complex subunit 4 (TRAPPC4) from Bos taurus (Bovine).